Reading from the N-terminus, the 351-residue chain is Transmembrane protein 184 homolog DDB_G0279555 (351 aa).

Residues 1-21 traverse the membrane as a helical segment; it reads MWIVAGVCSGVAILLSFYLIY. Asn-26 carries an N-linked (GlcNAc...) asparagine glycan. A run of 5 helical transmembrane segments spans residues 39 to 59, 73 to 93, 127 to 147, 162 to 182, and 206 to 226; these read ILIM…FVEL, YVLY…FDLV, FVLQ…VLET, YVWL…FLVL, and ILFF…FGVI. An N-linked (GlcNAc...) asparagine glycan is attached at Asn-236. The chain crosses the membrane as a helical span at residues 241–261; that stretch reads LQDFITCVEMVILAICHHFFF. 2 N-linked (GlcNAc...) asparagine glycosylation sites follow: Asn-301 and Asn-304. Positions 327-351 are disordered; it reads HNHPTTKKKDEESNLLEPEDKDIII. Acidic residues predominate over residues 339-351; the sequence is SNLLEPEDKDIII.

Belongs to the TMEM184 family.

The protein resides in the cell membrane. Its function is as follows. Probable transporter. This chain is Transmembrane protein 184 homolog DDB_G0279555 (tmem184C), found in Dictyostelium discoideum (Social amoeba).